The primary structure comprises 298 residues: Short-chain dehydrogenase/reductase prx6 (298 aa).

Residues Ile-27, Asp-70, Asn-97, Tyr-174, Lys-178, Val-208, and Thr-210 each contribute to the NADP(+) site. The Proton acceptor role is filled by Tyr-174. Residue Lys-178 is the Lowers pKa of active site Tyr of the active site.

The protein belongs to the short-chain dehydrogenases/reductases (SDR) family.

It participates in sesquiterpene biosynthesis. Functionally, short-chain dehydrogenase/reductase; part of the gene cluster that mediates the biosynthesis of PR-toxin, a bicyclic sesquiterpene belonging to the eremophilane class and acting as a mycotoxin. The first step of the pathway is catalyzed by the aristolochene synthase which performs the cyclization of trans,trans-farnesyl diphosphate (FPP) to the bicyclic sesquiterpene aristolochene. Following the formation of aristolochene, the non-oxygenated aristolochene is converted to the trioxygenated intermediate eremofortin B, via 7-epi-neopetasone. This conversion appears to involve three enzymes, a hydroxysterol oxidase-like enzyme, the quinone-oxidase prx3 that forms the quinone-type-structure in the bicyclic nucleus of aristolochene with the C8-oxo group and the C-3 hydroxyl group, and the P450 monooxygenase prx9 that introduces the epoxide at the double bond between carbons 1 and 2. No monoxy or dioxy-intermediates have been reported to be released to the broth, so these three early oxidative reactions may be coupled together. Eremofortin B is further oxidized by another P450 monooxygenase, that introduces a second epoxide between carbons 7 and 11 prior to acetylation to eremofortin A by the acetyltransferase prx11. The second epoxidation may be performed by a second P450 monooxygenase. After the acetylation step, eremofortin A is converted to eremofortin C and then to PR-toxin. First the conversion of eremofortin A to eremofortin C proceeds by oxidation of the side chain of the molecule at C-12 and is catalyzed by the short-chain oxidoreductase prx1. The cytochrome P450 monooxygenase prx8 also plays a role in this step. The primary alcohol formed at C-12 is finally oxidized by the short-chain alcohol dehydrogenase prx4 that forms PR-toxin. This is Short-chain dehydrogenase/reductase prx6 from Penicillium rubens (strain ATCC 28089 / DSM 1075 / NRRL 1951 / Wisconsin 54-1255) (Penicillium chrysogenum).